Here is a 117-residue protein sequence, read N- to C-terminus: Large ribosomal subunit protein bL20 (117 aa).

Belongs to the bacterial ribosomal protein bL20 family.

In terms of biological role, binds directly to 23S ribosomal RNA and is necessary for the in vitro assembly process of the 50S ribosomal subunit. It is not involved in the protein synthesizing functions of that subunit. The sequence is that of Large ribosomal subunit protein bL20 from Nitratidesulfovibrio vulgaris (strain DP4) (Desulfovibrio vulgaris).